We begin with the raw amino-acid sequence, 267 residues long: Type III pantothenate kinase (267 aa).

ATP is bound at residue 6-13 (DSGNSRLK). Residues Y96 and 103–106 (GADR) contribute to the substrate site. The Proton acceptor role is filled by D105. T131 serves as a coordination point for ATP. T181 provides a ligand contact to substrate.

The protein belongs to the type III pantothenate kinase family. As to quaternary structure, homodimer. The cofactor is NH4(+). K(+) is required as a cofactor.

Its subcellular location is the cytoplasm. The catalysed reaction is (R)-pantothenate + ATP = (R)-4'-phosphopantothenate + ADP + H(+). It participates in cofactor biosynthesis; coenzyme A biosynthesis; CoA from (R)-pantothenate: step 1/5. Its function is as follows. Catalyzes the phosphorylation of pantothenate (Pan), the first step in CoA biosynthesis. This Bordetella bronchiseptica (strain ATCC BAA-588 / NCTC 13252 / RB50) (Alcaligenes bronchisepticus) protein is Type III pantothenate kinase.